A 689-amino-acid polypeptide reads, in one-letter code: DNA ligase (689 aa).

NAD(+)-binding positions include Asp-40 to Asp-44, Ser-89 to Leu-90, and Glu-121. The active-site N6-AMP-lysine intermediate is Lys-123. The NAD(+) site is built by Arg-144, Glu-179, Lys-295, and Lys-319. Zn(2+) contacts are provided by Cys-413, Cys-416, Cys-431, and Cys-437. One can recognise a BRCT domain in the interval Arg-610–Val-689.

It belongs to the NAD-dependent DNA ligase family. LigA subfamily. The cofactor is Mg(2+). It depends on Mn(2+) as a cofactor.

The enzyme catalyses NAD(+) + (deoxyribonucleotide)n-3'-hydroxyl + 5'-phospho-(deoxyribonucleotide)m = (deoxyribonucleotide)n+m + AMP + beta-nicotinamide D-nucleotide.. DNA ligase that catalyzes the formation of phosphodiester linkages between 5'-phosphoryl and 3'-hydroxyl groups in double-stranded DNA using NAD as a coenzyme and as the energy source for the reaction. It is essential for DNA replication and repair of damaged DNA. The sequence is that of DNA ligase from Rickettsia africae (strain ESF-5).